The sequence spans 304 residues: MQKFDTKTFQGLILTLQDYWARQGCTIVQPLDMEVGAGTSHPITCLRALGPEPIAAAYVQPSRRPTDGRYGENPNRLQHYYQFQVIIKPSPDNIQELYLDSLKALGLDPTVHDIRFVEDNWENPTLGAWGLGWEVWLNGMEVTQFTYFQQVGGLECKPVTGEITYGLERLAMYIQGVDSVYDLVWCDGPLGKTTYGDIYHQNEVEQSTYNFEHADVDFLFTCFEQYEKEAQDLLALETPLPLPAYERILKAGHTFNLLDARKAISVTERQRYILRIRTLTKAVAEAYYASREALGFPMCNKNQN.

It belongs to the class-II aminoacyl-tRNA synthetase family. In terms of assembly, tetramer of two alpha and two beta subunits.

The protein localises to the cytoplasm. It catalyses the reaction tRNA(Gly) + glycine + ATP = glycyl-tRNA(Gly) + AMP + diphosphate. This chain is Glycine--tRNA ligase alpha subunit, found in Photorhabdus laumondii subsp. laumondii (strain DSM 15139 / CIP 105565 / TT01) (Photorhabdus luminescens subsp. laumondii).